The primary structure comprises 349 residues: tRNA pseudouridine synthase D (349 aa).

Phe-27 contributes to the substrate binding site. Residue Asp-80 is the Nucleophile of the active site. Substrate is bound at residue Asn-129. The TRUD domain maps to 155 to 303 (GVPNYFGAQR…VEAARRAMLL (149 aa)). A substrate-binding site is contributed by Phe-329.

This sequence belongs to the pseudouridine synthase TruD family.

The catalysed reaction is uridine(13) in tRNA = pseudouridine(13) in tRNA. Responsible for synthesis of pseudouridine from uracil-13 in transfer RNAs. In Shigella boydii serotype 18 (strain CDC 3083-94 / BS512), this protein is tRNA pseudouridine synthase D.